The sequence spans 33 residues: Dermonecrotic toxin LbSicTox-alphaIB1b (33 aa).

Histidine 11 is an active-site residue. Residues glutamate 31 and aspartate 33 each coordinate Mg(2+).

Belongs to the arthropod phospholipase D family. Class II subfamily. Mg(2+) is required as a cofactor. Contains 2 disulfide bonds. As to expression, expressed by the venom gland.

It is found in the secreted. It carries out the reaction an N-(acyl)-sphingosylphosphocholine = an N-(acyl)-sphingosyl-1,3-cyclic phosphate + choline. The enzyme catalyses an N-(acyl)-sphingosylphosphoethanolamine = an N-(acyl)-sphingosyl-1,3-cyclic phosphate + ethanolamine. The catalysed reaction is a 1-acyl-sn-glycero-3-phosphocholine = a 1-acyl-sn-glycero-2,3-cyclic phosphate + choline. It catalyses the reaction a 1-acyl-sn-glycero-3-phosphoethanolamine = a 1-acyl-sn-glycero-2,3-cyclic phosphate + ethanolamine. In terms of biological role, dermonecrotic toxins cleave the phosphodiester linkage between the phosphate and headgroup of certain phospholipids (sphingolipid and lysolipid substrates), forming an alcohol (often choline) and a cyclic phosphate. This toxin acts on sphingomyelin (SM) with high activity (9.5 U/mg). It may also act on ceramide phosphoethanolamine (CPE), lysophosphatidylcholine (LPC) and lysophosphatidylethanolamine (LPE), but not on lysophosphatidylserine (LPS), and lysophosphatidylglycerol (LPG). It acts by transphosphatidylation, releasing exclusively cyclic phosphate products as second products. Induces dermonecrosis, hemolysis, increased vascular permeability, edema, inflammatory response, and platelet aggregation. This chain is Dermonecrotic toxin LbSicTox-alphaIB1b, found in Loxosceles boneti (North American fiddleback spider).